A 497-amino-acid chain; its full sequence is Glutamyl-tRNA(Gln) amidotransferase subunit A (497 aa).

Catalysis depends on charge relay system residues K91 and S166. The tract at residues 143–171 (SSTENSAYGPTHNPWDLERTAGGSGGGSS) is disordered. S190 functions as the Acyl-ester intermediate in the catalytic mechanism.

Belongs to the amidase family. GatA subfamily. As to quaternary structure, heterotrimer of A, B and C subunits.

It catalyses the reaction L-glutamyl-tRNA(Gln) + L-glutamine + ATP + H2O = L-glutaminyl-tRNA(Gln) + L-glutamate + ADP + phosphate + H(+). In terms of biological role, allows the formation of correctly charged Gln-tRNA(Gln) through the transamidation of misacylated Glu-tRNA(Gln) in organisms which lack glutaminyl-tRNA synthetase. The reaction takes place in the presence of glutamine and ATP through an activated gamma-phospho-Glu-tRNA(Gln). The protein is Glutamyl-tRNA(Gln) amidotransferase subunit A of Corynebacterium glutamicum (strain ATCC 13032 / DSM 20300 / JCM 1318 / BCRC 11384 / CCUG 27702 / LMG 3730 / NBRC 12168 / NCIMB 10025 / NRRL B-2784 / 534).